The primary structure comprises 603 residues: Glutamyl-tRNA(Gln) amidotransferase subunit B, mitochondrial (603 aa).

2 disordered regions span residues R38 to A61 and E72 to H91. Positions W42–S58 are enriched in polar residues.

It belongs to the GatB/GatE family. GatB subfamily. As to quaternary structure, subunit of the heterotrimeric GatCAB amidotransferase (AdT) complex, composed of A, B and C subunits.

Its subcellular location is the mitochondrion. The catalysed reaction is L-glutamyl-tRNA(Gln) + L-glutamine + ATP + H2O = L-glutaminyl-tRNA(Gln) + L-glutamate + ADP + phosphate + H(+). Allows the formation of correctly charged Gln-tRNA(Gln) through the transamidation of misacylated Glu-tRNA(Gln) in the mitochondria. The reaction takes place in the presence of glutamine and ATP through an activated gamma-phospho-Glu-tRNA(Gln). This Paracoccidioides brasiliensis (strain Pb18) protein is Glutamyl-tRNA(Gln) amidotransferase subunit B, mitochondrial.